Here is a 464-residue protein sequence, read N- to C-terminus: UNC93-like protein 3 (464 aa).

11 helical membrane passes run 31 to 51, 62 to 82, 84 to 104, 110 to 130, 160 to 180, 192 to 212, 251 to 271, 275 to 295, 313 to 333, 341 to 361, and 392 to 412; these read VHILSISFLLIFLAYGAAQNL, ISLGILYVSFMFCSMVASLVV, LMGSKNALVLGTTGYWLFVAA, WFTMVPASLYLGFAASIIWVG, EFWAMFACHQLFGNLITLALL, TLLMLVFLFSMTLGTILMFFI, LLIVPLLAYSGLQQAFVWAEF, IVTPAIGVSGVGGAMAVYGAL, ITFIVSGGAVAQASVFLWLLL, VLGTAYPLIMAAILGIGDGIL, and IAIVFFLSPYISLQAMLIVML.

It belongs to the unc-93 family.

The protein resides in the membrane. The polypeptide is UNC93-like protein 3 (Arabidopsis thaliana (Mouse-ear cress)).